We begin with the raw amino-acid sequence, 361 residues long: Peptide chain release factor 1 (361 aa).

Q237 bears the N5-methylglutamine mark.

The protein belongs to the prokaryotic/mitochondrial release factor family. Methylated by PrmC. Methylation increases the termination efficiency of RF1.

The protein resides in the cytoplasm. In terms of biological role, peptide chain release factor 1 directs the termination of translation in response to the peptide chain termination codons UAG and UAA. The chain is Peptide chain release factor 1 from Chromohalobacter salexigens (strain ATCC BAA-138 / DSM 3043 / CIP 106854 / NCIMB 13768 / 1H11).